The sequence spans 83 residues: U5-theraphotoxin-Hs1b 1 (83 aa).

An N-terminal signal peptide occupies residues 1–21; sequence MKTSMFLTLTGLVLLFVVCYA. A propeptide spanning residues 22-49 is cleaved from the precursor; that stretch reads SESEEKEFPKELLSSIFAADSDFKEEER. Cystine bridges form between Cys51/Cys63, Cys56/Cys68, and Cys62/Cys75.

It belongs to the neurotoxin 10 (Hwtx-1) family. 51 (Hntx-8) subfamily. Hntx-8 sub-subfamily. In terms of tissue distribution, expressed by the venom gland.

The protein localises to the secreted. Its function is as follows. Weakly inhibits 5HT3A receptors and Kv1.3/KCNA3 voltage-gated potassium channels. Agglutinates erythrocytes. The chain is U5-theraphotoxin-Hs1b 1 from Cyriopagopus schmidti (Chinese bird spider).